Reading from the N-terminus, the 471-residue chain is Glutamate--tRNA ligase (471 aa).

A 'HIGH' region motif is present at residues 9-19 (PSPTGYLHVGG). C98, C100, C125, and H127 together coordinate Zn(2+). The 'KMSKS' region motif lies at 237–241 (KLSKR). Position 240 (K240) interacts with ATP.

This sequence belongs to the class-I aminoacyl-tRNA synthetase family. Glutamate--tRNA ligase type 1 subfamily. As to quaternary structure, monomer. Requires Zn(2+) as cofactor.

It localises to the cytoplasm. It carries out the reaction tRNA(Glu) + L-glutamate + ATP = L-glutamyl-tRNA(Glu) + AMP + diphosphate. Functionally, catalyzes the attachment of glutamate to tRNA(Glu) in a two-step reaction: glutamate is first activated by ATP to form Glu-AMP and then transferred to the acceptor end of tRNA(Glu). This chain is Glutamate--tRNA ligase, found in Shigella flexneri.